A 726-amino-acid polypeptide reads, in one-letter code: Catalase-peroxidase (726 aa).

Positions 1-33 (MSTSDDIHNTTATGKCPFHQGGHDQSAGAGTTT) are disordered. The tryptophyl-tyrosyl-methioninium (Trp-Tyr) (with M-252) cross-link spans 105-226 (WHGAGTYRSI…LGATEMGLIY (122 aa)). His-106 acts as the Proton acceptor in catalysis. The tryptophyl-tyrosyl-methioninium (Tyr-Met) (with W-105) cross-link spans 226 to 252 (YVNPEGPDHSGEPLSAAAAIRATFGNM). Residue His-267 participates in heme b binding.

Belongs to the peroxidase family. Peroxidase/catalase subfamily. As to quaternary structure, homodimer or homotetramer. It depends on heme b as a cofactor. Post-translationally, formation of the three residue Trp-Tyr-Met cross-link is important for the catalase, but not the peroxidase activity of the enzyme.

It catalyses the reaction H2O2 + AH2 = A + 2 H2O. The enzyme catalyses 2 H2O2 = O2 + 2 H2O. Functionally, bifunctional enzyme with both catalase and broad-spectrum peroxidase activity. This chain is Catalase-peroxidase, found in Shigella flexneri.